The primary structure comprises 369 residues: 3-isopropylmalate dehydrogenase (369 aa).

Glycine 77–glutamate 90 lines the NAD(+) pocket. Residues arginine 97, arginine 107, arginine 135, and aspartate 226 each coordinate substrate. The Mg(2+) site is built by aspartate 226, aspartate 250, and aspartate 254. NAD(+) is bound at residue glycine 289 to asparagine 301.

Belongs to the isocitrate and isopropylmalate dehydrogenases family. LeuB type 1 subfamily. As to quaternary structure, homodimer. Mg(2+) is required as a cofactor. Requires Mn(2+) as cofactor.

It is found in the cytoplasm. It carries out the reaction (2R,3S)-3-isopropylmalate + NAD(+) = 4-methyl-2-oxopentanoate + CO2 + NADH. It functions in the pathway amino-acid biosynthesis; L-leucine biosynthesis; L-leucine from 3-methyl-2-oxobutanoate: step 3/4. In terms of biological role, catalyzes the oxidation of 3-carboxy-2-hydroxy-4-methylpentanoate (3-isopropylmalate) to 3-carboxy-4-methyl-2-oxopentanoate. The product decarboxylates to 4-methyl-2 oxopentanoate. In Cereibacter sphaeroides (strain ATCC 17023 / DSM 158 / JCM 6121 / CCUG 31486 / LMG 2827 / NBRC 12203 / NCIMB 8253 / ATH 2.4.1.) (Rhodobacter sphaeroides), this protein is 3-isopropylmalate dehydrogenase.